A 331-amino-acid chain; its full sequence is 5-formaminoimidazole-4-carboxamide-1-(beta)-D-ribofuranosyl 5'-monophosphate synthetase (331 aa).

The 5-amino-1-(5-phospho-beta-D-ribosyl)imidazole-4-carboxamide site is built by His-9 and Ser-69. In terms of domain architecture, ATP-grasp spans 76–322; that stretch reads VELVEKMKVP…IAMELKQGLE (247 aa). Residues 120–179 and Glu-201 each bind ATP; that span reads PDDI…VPVY. Position 229 (Asn-229) interacts with 5-amino-1-(5-phospho-beta-D-ribosyl)imidazole-4-carboxamide. Glu-267 and Glu-280 together coordinate Mg(2+).

This sequence belongs to the phosphohexose mutase family. It depends on Mg(2+) as a cofactor. Mn(2+) serves as cofactor.

The catalysed reaction is 5-amino-1-(5-phospho-beta-D-ribosyl)imidazole-4-carboxamide + formate + ATP = 5-formamido-1-(5-phospho-D-ribosyl)imidazole-4-carboxamide + ADP + phosphate. It participates in purine metabolism; IMP biosynthesis via de novo pathway; 5-formamido-1-(5-phospho-D-ribosyl)imidazole-4-carboxamide from 5-amino-1-(5-phospho-D-ribosyl)imidazole-4-carboxamide (formate route): step 1/1. Functionally, catalyzes the ATP- and formate-dependent formylation of 5-aminoimidazole-4-carboxamide-1-beta-d-ribofuranosyl 5'-monophosphate (AICAR) to 5-formaminoimidazole-4-carboxamide-1-beta-d-ribofuranosyl 5'-monophosphate (FAICAR) in the absence of folates. This Thermococcus kodakarensis (strain ATCC BAA-918 / JCM 12380 / KOD1) (Pyrococcus kodakaraensis (strain KOD1)) protein is 5-formaminoimidazole-4-carboxamide-1-(beta)-D-ribofuranosyl 5'-monophosphate synthetase.